We begin with the raw amino-acid sequence, 34 residues long: MSDIN-like toxin proprotein 4 (34 aa).

A propeptide spanning residues 1–10 (MSDINATRLP) is cleaved from the precursor. The cyclopeptide (Val-Pro) cross-link spans 11–17 (VWIGYSP). Positions 18 to 34 (CVGDDCIALLTRGEGLC) are excised as a propeptide.

This sequence belongs to the MSDIN fungal toxin family. Processed by the macrocyclase-peptidase enzyme POPB to yield a toxic cyclic heptapeptide. POPB first removes 10 residues from the N-terminus. Conformational trapping of the remaining peptide forces the enzyme to release this intermediate rather than proceed to macrocyclization. The enzyme rebinds the remaining peptide in a different conformation and catalyzes macrocyclization of the N-terminal 7 residues. In terms of tissue distribution, expressed in basidiocarps.

Functionally, probable toxin that belongs to the MSDIN-like toxin family responsible for a large number of food poisoning cases and deaths. The chain is MSDIN-like toxin proprotein 4 from Amanita exitialis (Guangzhou destroying angel).